The chain runs to 299 residues: Fluorinase (299 aa).

S-adenosyl-L-methionine contacts are provided by residues aspartate 16, 21-23, tyrosine 77, serine 158, aspartate 210, asparagine 215, 269-270, and 277-279; these read DDS, SR, and RNA.

As to quaternary structure, homohexamer; dimers of trimer.

It carries out the reaction fluoride + S-adenosyl-L-methionine = 5'-deoxy-5'-fluoroadenosine + L-methionine. Competitively inhibited by S-adenosyl-L-homocysteine (AdoHcy) and S-adenosyl-L-homocysteine (SAH). Sinefungin is only weakly inhibitory. In terms of biological role, involved in the biosynthesis of fluorometabolites. Catalyzes the formation of a C-F bond by combining S-adenosyl-L-methionine (SAM) and fluoride to generate 5'-fluoro-5'-deoxyadenosine (5'-FDA) and L-methionine. It can also use 2'-deoxyadenosine in place of adenosine as substrate. The polypeptide is Fluorinase (Streptantibioticus cattleyicolor (Streptomyces cattleya)).